A 267-amino-acid chain; its full sequence is Transcription factor HES-1 (267 aa).

The tract at residues 1 to 45 is disordered; it reads MPADLMEKNSSSPVAATPASMSNTPDKPKTASEHRKSSKPIMEKR. Residues 8 to 25 show a composition bias toward polar residues; sequence KNSSSPVAATPASMSNTP. The span at 26-35 shows a compositional bias: basic and acidic residues; sequence DKPKTASEHR. The bHLH domain maps to 34–91; it reads HRKSSKPIMEKRRRARINESLGQLKTLILDALKKDSSRHSKLEKADILEMTVKHLRNL. Residues 110–143 enclose the Orange domain; the sequence is YRAGFSECMNEVTRFLSTCEGVNTDVRTRLLGHL. A WRPW motif motif is present at residues 264–267; that stretch reads WRPW.

In terms of assembly, transcription repression requires formation of a complex with a corepressor protein of the Groucho/TLE family. Interacts with the bHLH protein hes2, and binds DNA in the form of a heterodimer with the bHLH protein hey1/hrt1. Interacts with the bHLH protein hes6; this interaction may inhibit the transcriptional repressor activity.

Its subcellular location is the nucleus. Its function is as follows. Transcriptional repressor of a subset of early mesodermal genes including myod1 and t/bra. Binds DNA on N-box motifs: 5'-CACNAG-3'. Acts as a negative regulator of myogenesis, mediating Notch signaling to repress expression of myod1. The sequence is that of Transcription factor HES-1 from Xenopus tropicalis (Western clawed frog).